A 291-amino-acid chain; its full sequence is Small ribosomal subunit biogenesis GTPase RsgA (291 aa).

A CP-type G domain is found at 63–221; sequence ENELKRPPVS…IADTPGFSAL (159 aa). GTP-binding positions include 112 to 115 and 164 to 172; these read TKKD and GQSGVGKST. Residues C245, C250, H252, and C258 each contribute to the Zn(2+) site.

The protein belongs to the TRAFAC class YlqF/YawG GTPase family. RsgA subfamily. Monomer. Associates with 30S ribosomal subunit, binds 16S rRNA. It depends on Zn(2+) as a cofactor.

It localises to the cytoplasm. Functionally, one of several proteins that assist in the late maturation steps of the functional core of the 30S ribosomal subunit. Helps release RbfA from mature subunits. May play a role in the assembly of ribosomal proteins into the subunit. Circularly permuted GTPase that catalyzes slow GTP hydrolysis, GTPase activity is stimulated by the 30S ribosomal subunit. This is Small ribosomal subunit biogenesis GTPase RsgA from Staphylococcus aureus (strain COL).